A 727-amino-acid chain; its full sequence is Cyclin-T1 (727 aa).

Serine 117 is subject to Phosphoserine. The short motif at 253–270 (KRIWNWRAWQADRKTKAD) is the Nuclear localization signal element. Lysine 343 participates in a covalent cross-link: Glycyl lysine isopeptide (Lys-Gly) (interchain with G-Cter in SUMO2). Phosphoserine is present on serine 389. A coiled-coil region spans residues 389 to 420 (SLKEYRAKHAEELAAQKRQLENMEANVKSQYA). Position 391 is an N6-acetyllysine (lysine 391). Lysine 416 participates in a covalent cross-link: Glycyl lysine isopeptide (Lys-Gly) (interchain with G-Cter in SUMO2). Residues serine 417 and serine 475 each carry the ADP-ribosylserine modification. Residues 481-551 (IKMRIKVHTA…RLGDPKHSSQ (71 aa)) form a histidine-rich domain (HRD) region. A Glycyl lysine isopeptide (Lys-Gly) (interchain with G-Cter in SUMO2) cross-link involves residue lysine 482. Lysine 486 is modified (N6-(ADP-ribosyl)lysine). The segment covering 487 to 507 (VHTAADKHNSVDDSVTKNREH) has biased composition (basic and acidic residues). Disordered regions lie at residues 487 to 631 (VHTA…QPSC) and 691 to 727 (YMNPRAGGMSSRSGNTDKPRPPPLPSEPPPPLPPLPK). An ADP-ribosylhistidine modification is found at histidine 488. A phosphoserine mark is found at serine 496 and serine 500. Over residues 508–531 (KEKHKTHPSNHHHHHNHHSHKHSH) the composition is skewed to basic residues. ADP-ribosylhistidine is present on histidine 531. An ADP-ribosylserine mark is found at serine 532, serine 550, and serine 553. ADP-ribosylhistidine is present on histidine 557. Positions 561–571 (SLSSSFSSSSS) are enriched in low complexity. Position 564 is an ADP-ribosylserine (serine 564). A Phosphoserine modification is found at serine 565. Residues 616-631 (GHSSDTSGLHFSQPSC) show a composition bias toward polar residues. Residues 711–727 (PPPLPSEPPPPLPPLPK) are compositionally biased toward pro residues.

It belongs to the cyclin family. Cyclin C subfamily. Cyclin-T1 is the predominant cyclin that associates with CDK9 to form a heterodimer called P-TEFb. P-TEFb forms a complex with AFF4/AF5Q31. Component of a complex which is at least composed of HTATSF1/Tat-SF1, P-TEFb complex, RNA pol II, SUPT5H, and NCL/nucleolin. Component of the 7SK snRNP complex at least composed of P-TEFb (composed of CDK9 and CCNT1/cyclin-T1), HEXIM1, HEXIM2, BCDIN3, SART3 proteins and 7SK and U6 snRNAs. Interacts (via central region) with ZMYND8 (via N-terminus); the interaction is direct and the association appears to occur between homodimeric ZMYND8 and the activated form of the P-TEFb complex. Interacts with BRD4, targets chromatin binding. Interacts with JMJD6. Interacts with MDFIC. Interacts with HSF1. Interacts with HTATSF1. Interacts with TBX21. As to quaternary structure, (Microbial infection) Binds to BIV Tat, however Tat binds TAR RNA in a Cyc-T1-independent mode. ADP-ribosylation on serine residues by PARP1 in response to DNA damage disrupts the phase separation activity of CCNT1, thereby preventing activation of CDK9.

It is found in the nucleus. Functionally, regulatory subunit of the cyclin-dependent kinase pair (CDK9/cyclin-T1) complex, also called positive transcription elongation factor B (P-TEFb), which facilitates the transition from abortive to productive elongation by phosphorylating the CTD (C-terminal domain) of the large subunit of RNA polymerase II (RNA Pol II). Required to activate the protein kinase activity of CDK9: acts by mediating formation of liquid-liquid phase separation (LLPS) that enhances binding of P-TEFb to the CTD of RNA Pol II. The polypeptide is Cyclin-T1 (CCNT1) (Bos taurus (Bovine)).